Consider the following 423-residue polypeptide: Kynureninase (423 aa).

Residues L105, S106, 133–136 (FPSD), D218, H221, and Y243 contribute to the pyridoxal 5'-phosphate site. Position 244 is an N6-(pyridoxal phosphate)lysine (K244). The pyridoxal 5'-phosphate site is built by W273 and N301.

This sequence belongs to the kynureninase family. In terms of assembly, homodimer. Pyridoxal 5'-phosphate is required as a cofactor.

It carries out the reaction L-kynurenine + H2O = anthranilate + L-alanine + H(+). The enzyme catalyses 3-hydroxy-L-kynurenine + H2O = 3-hydroxyanthranilate + L-alanine + H(+). It participates in amino-acid degradation; L-kynurenine degradation; L-alanine and anthranilate from L-kynurenine: step 1/1. The protein operates within cofactor biosynthesis; NAD(+) biosynthesis; quinolinate from L-kynurenine: step 2/3. Catalyzes the cleavage of L-kynurenine (L-Kyn) and L-3-hydroxykynurenine (L-3OHKyn) into anthranilic acid (AA) and 3-hydroxyanthranilic acid (3-OHAA), respectively. This Xanthomonas oryzae pv. oryzae (strain MAFF 311018) protein is Kynureninase.